We begin with the raw amino-acid sequence, 258 residues long: Ubiquinone/menaquinone biosynthesis C-methyltransferase UbiE (258 aa).

The segment at 1–20 (MSESRTSADGGMETSYGFRE) is disordered. S-adenosyl-L-methionine is bound by residues threonine 81, aspartate 102, and 130 to 131 (NA).

It belongs to the class I-like SAM-binding methyltransferase superfamily. MenG/UbiE family.

It catalyses the reaction a 2-demethylmenaquinol + S-adenosyl-L-methionine = a menaquinol + S-adenosyl-L-homocysteine + H(+). The enzyme catalyses a 2-methoxy-6-(all-trans-polyprenyl)benzene-1,4-diol + S-adenosyl-L-methionine = a 5-methoxy-2-methyl-3-(all-trans-polyprenyl)benzene-1,4-diol + S-adenosyl-L-homocysteine + H(+). It participates in quinol/quinone metabolism; menaquinone biosynthesis; menaquinol from 1,4-dihydroxy-2-naphthoate: step 2/2. The protein operates within cofactor biosynthesis; ubiquinone biosynthesis. Functionally, methyltransferase required for the conversion of demethylmenaquinol (DMKH2) to menaquinol (MKH2) and the conversion of 2-polyprenyl-6-methoxy-1,4-benzoquinol (DDMQH2) to 2-polyprenyl-3-methyl-6-methoxy-1,4-benzoquinol (DMQH2). In Rhizobium etli (strain CIAT 652), this protein is Ubiquinone/menaquinone biosynthesis C-methyltransferase UbiE.